Reading from the N-terminus, the 338-residue chain is Malate dehydrogenase, mitochondrial (338 aa).

The N-terminal 24 residues, 1 to 24 (MLSALARPVGAALRRSFSTSAQNN), are a transit peptide targeting the mitochondrion. Residues 31-37 (GASGGIG) and aspartate 57 contribute to the NAD(+) site. An O-linked (GlcNAc) serine glycan is attached at serine 33. Residues lysine 78 and lysine 91 each carry the N6-acetyllysine; alternate modification. Residues lysine 78 and lysine 91 each carry the N6-succinyllysine; alternate modification. Residues arginine 104 and arginine 110 each coordinate substrate. NAD(+) contacts are provided by residues asparagine 117 and 140 to 142 (ISN). Asparagine 142 contributes to the substrate binding site. Lysine 165 is modified (N6-acetyllysine). Arginine 176 provides a ligand contact to substrate. Lysine 185 bears the N6-acetyllysine; alternate mark. The residue at position 185 (lysine 185) is an N6-succinyllysine; alternate. The Proton acceptor role is filled by histidine 200. At lysine 203 the chain carries N6-succinyllysine. 2 positions are modified to N6-acetyllysine; alternate: lysine 215 and lysine 239. An N6-succinyllysine; alternate mark is found at lysine 215 and lysine 239. Lysine 239 bears the N6-malonyllysine; alternate mark. Serine 246 bears the Phosphoserine mark. Methionine 251 contributes to the NAD(+) binding site. Residue lysine 269 is modified to N6-succinyllysine. Residues lysine 296, lysine 301, lysine 307, lysine 314, and lysine 324 each carry the N6-acetyllysine; alternate modification. N6-succinyllysine; alternate occurs at positions 296, 301, 307, 314, and 324. At lysine 307 the chain carries N6-malonyllysine; alternate. Serine 326 is modified (phosphoserine). Residues lysine 328, lysine 329, and lysine 335 each carry the N6-acetyllysine; alternate modification. Lysine 328 carries the post-translational modification N6-succinyllysine; alternate. Lysine 329 bears the N6-malonyllysine; alternate mark. The residue at position 335 (lysine 335) is an N6-succinyllysine; alternate.

This sequence belongs to the LDH/MDH superfamily. MDH type 1 family. In terms of assembly, homodimer. Acetylation is enhanced after treatment either with trichostin A (TCA) or with nicotinamide (NAM) with the appearance of tri- and tetraacetylations. Glucose also increases acetylation. Expressed in flagella of epididymal sperm.

It localises to the mitochondrion matrix. It catalyses the reaction (S)-malate + NAD(+) = oxaloacetate + NADH + H(+). With respect to regulation, enzyme activity is enhanced by acetylation. This Rattus norvegicus (Rat) protein is Malate dehydrogenase, mitochondrial (Mdh2).